We begin with the raw amino-acid sequence, 335 residues long: Glucan endo-1,3-beta-glucosidase, acidic isoform (335 aa).

Positions 1-29 are cleaved as a signal peptide; it reads MARQGVIASMHALALLLGAFAAIPTGVQS. Residue E122 is the Proton donor of the active site. Residue E259 is the Nucleophile of the active site.

The protein belongs to the glycosyl hydrolase 17 family. Accumulates in aleurone layers. Much lower levels are found in the embryo, and none in starchy endosperm.

It is found in the secreted. The protein localises to the extracellular space. It carries out the reaction Hydrolysis of (1-&gt;3)-beta-D-glucosidic linkages in (1-&gt;3)-beta-D-glucans.. Its function is as follows. Is thought to be an important plant defense-related product against fungal pathogens. This Zea mays (Maize) protein is Glucan endo-1,3-beta-glucosidase, acidic isoform.